The following is a 957-amino-acid chain: Collagen alpha-1(XXI) chain (957 aa).

The first 16 residues, 1-16 (MPGIIYILCSILLIES), serve as a signal peptide directing secretion. The region spanning 37 to 211 (DLVFILDGSW…RIREIMKQKL (175 aa)) is the VWFA domain. The 183-residue stretch at 230–412 (GFDILLGLGI…LQKLRIYCDP (183 aa)) folds into the Laminin G-like domain. Disordered regions lie at residues 441–788 (PAPC…GKEQ) and 820–935 (CKTQ…DAGI). Collagen-like domains lie at 448-501 (PGEK…PRGF), 502-543 (AGLK…DKGD), 544-591 (IGID…EEGK), 592-642 (PGPP…ISGP), 643-684 (EGIS…IPGQ), 685-741 (QGYT…EIGE), 742-786 (HGHR…QQGK), and 825-882 (GSPG…GNKG). The span at 483–498 (TSGSPGIPGSPGVQGP) shows a compositional bias: low complexity. Over residues 535–556 (MGPKGDKGDIGIDGKKGTKGDK) the composition is skewed to basic and acidic residues. 2 stretches are compositionally biased toward low complexity: residues 597–616 (MEGLRGLPGIPGIPGNDGAN) and 633–649 (PTGTPGISGPEGISGPQ). Residues 733 to 744 (KGEKGEIGEHGH) are compositionally biased toward basic and acidic residues. Positions 775–786 (QGLPGPKGQQGK) are enriched in low complexity.

The protein belongs to the fibril-associated collagens with interrupted helices (FACIT) family.

The protein resides in the secreted. It is found in the extracellular space. Its subcellular location is the extracellular matrix. It localises to the cytoplasm. The protein is Collagen alpha-1(XXI) chain (col21a1) of Xenopus laevis (African clawed frog).